The sequence spans 462 residues: Proline--tRNA ligase (462 aa).

This sequence belongs to the class-II aminoacyl-tRNA synthetase family. ProS type 3 subfamily. Homodimer.

Its subcellular location is the cytoplasm. It carries out the reaction tRNA(Pro) + L-proline + ATP = L-prolyl-tRNA(Pro) + AMP + diphosphate. Functionally, catalyzes the attachment of proline to tRNA(Pro) in a two-step reaction: proline is first activated by ATP to form Pro-AMP and then transferred to the acceptor end of tRNA(Pro). This is Proline--tRNA ligase from Thermoplasma volcanium (strain ATCC 51530 / DSM 4299 / JCM 9571 / NBRC 15438 / GSS1).